The chain runs to 409 residues: Elongation factor Tu, chloroplastic (409 aa).

In terms of domain architecture, tr-type G spans 10–214 (KPHVNIGTIG…TVDAYIPTPE (205 aa)). Residues 19 to 26 (GHVDHGKT) are G1. 19–26 (GHVDHGKT) contributes to the GTP binding site. Thr-26 serves as a coordination point for Mg(2+). The tract at residues 60-64 (GITIN) is G2. The interval 81–84 (DCPG) is G3. GTP contacts are provided by residues 81–85 (DCPGH) and 136–139 (NKED). Positions 136–139 (NKED) are G4. The segment at 174–176 (SAL) is G5.

This sequence belongs to the TRAFAC class translation factor GTPase superfamily. Classic translation factor GTPase family. EF-Tu/EF-1A subfamily.

It localises to the plastid. The protein localises to the chloroplast. It carries out the reaction GTP + H2O = GDP + phosphate + H(+). GTP hydrolase that promotes the GTP-dependent binding of aminoacyl-tRNA to the A-site of ribosomes during protein biosynthesis. This chain is Elongation factor Tu, chloroplastic (tufA), found in Pleurastrum terricola (Filamentous green alga).